The chain runs to 57 residues: Small ribosomal subunit protein eS27 (57 aa).

Zn(2+) is bound by residues Cys10, Cys13, Cys29, and Cys32. The segment at 10 to 32 (CPDCENEQTVFGKASTEVACAVC) adopts a C4-type zinc-finger fold.

It belongs to the eukaryotic ribosomal protein eS27 family. Part of the 30S ribosomal subunit. It depends on Zn(2+) as a cofactor.

This chain is Small ribosomal subunit protein eS27, found in Halobacterium salinarum (strain ATCC 29341 / DSM 671 / R1).